Here is a 427-residue protein sequence, read N- to C-terminus: Galactose-3-O-sulfotransferase 3 (427 aa).

Residues 1 to 19 (MPPIFQRLQQATKMSRRKI) lie on the Cytoplasmic side of the membrane. Residues 20–40 (LLLVLGCSTLSLLIHQGAQLS) form a helical; Signal-anchor for type II membrane protein membrane-spanning segment. At 41-427 (WYPKLFPLSC…RPIRALRPGH (387 aa)) the chain is on the lumenal side. N90, N109, N176, and N301 each carry an N-linked (GlcNAc...) asparagine glycan. The segment at 404-427 (MRLRPEPVLDNPPPRPIRALRPGH) is disordered.

The protein belongs to the galactose-3-O-sulfotransferase family. The cofactor is Mg(2+).

Its subcellular location is the golgi apparatus. The protein resides in the golgi stack membrane. It participates in protein modification; carbohydrate sulfation. Transfers a sulfate to position 3 of non-reducing beta-galactosyl residues in N-glycans and core2-branched O-glycans. Has high activity towards Gal-beta-1,4-GlcNAc, Gal-beta-1,4(Fuc-alpha-1,3)GlcNAc and lower activity towards Gal-beta-1,3(Fuc-alpha-1,4)GlcNAc. In Bos taurus (Bovine), this protein is Galactose-3-O-sulfotransferase 3 (GAL3ST3).